The primary structure comprises 66 residues: DNA gyrase inhibitor YacG (66 aa).

The Zn(2+) site is built by Cys9, Cys12, Cys28, and Cys32. The interval His45 to His66 is disordered.

It belongs to the DNA gyrase inhibitor YacG family. As to quaternary structure, interacts with GyrB. Requires Zn(2+) as cofactor.

Its function is as follows. Inhibits all the catalytic activities of DNA gyrase by preventing its interaction with DNA. Acts by binding directly to the C-terminal domain of GyrB, which probably disrupts DNA binding by the gyrase. This chain is DNA gyrase inhibitor YacG, found in Pseudomonas putida (strain W619).